Here is a 155-residue protein sequence, read N- to C-terminus: SsrA-binding protein (155 aa).

The protein belongs to the SmpB family.

It is found in the cytoplasm. Functionally, required for rescue of stalled ribosomes mediated by trans-translation. Binds to transfer-messenger RNA (tmRNA), required for stable association of tmRNA with ribosomes. tmRNA and SmpB together mimic tRNA shape, replacing the anticodon stem-loop with SmpB. tmRNA is encoded by the ssrA gene; the 2 termini fold to resemble tRNA(Ala) and it encodes a 'tag peptide', a short internal open reading frame. During trans-translation Ala-aminoacylated tmRNA acts like a tRNA, entering the A-site of stalled ribosomes, displacing the stalled mRNA. The ribosome then switches to translate the ORF on the tmRNA; the nascent peptide is terminated with the 'tag peptide' encoded by the tmRNA and targeted for degradation. The ribosome is freed to recommence translation, which seems to be the essential function of trans-translation. The protein is SsrA-binding protein of Gloeothece citriformis (strain PCC 7424) (Cyanothece sp. (strain PCC 7424)).